A 40-amino-acid polypeptide reads, in one-letter code: Photosystem II reaction center protein Y (40 aa).

A helical membrane pass occupies residues 5–23 (LVLVASPILLAVGWAGFNI).

The protein belongs to the PsbY family. In terms of assembly, PSII is composed of 1 copy each of membrane proteins PsbA, PsbB, PsbC, PsbD, PsbE, PsbF, PsbH, PsbI, PsbJ, PsbK, PsbL, PsbM, PsbT, PsbX, PsbY, PsbZ, Psb30/Ycf12, peripheral proteins PsbO, CyanoQ (PsbQ), PsbU, PsbV and a large number of cofactors. It forms dimeric complexes.

The protein resides in the cellular thylakoid membrane. Its function is as follows. Loosely associated component of the core of photosystem II (PSII), it is not always seen in crystals. PSII is a light-driven water plastoquinone oxidoreductase, using light energy to abstract electrons from H(2)O, generating a proton gradient subsequently used for ATP formation. This is Photosystem II reaction center protein Y from Synechococcus sp. (strain RCC307).